Reading from the N-terminus, the 202-residue chain is Large ribosomal subunit protein bL25 (202 aa).

This sequence belongs to the bacterial ribosomal protein bL25 family. CTC subfamily. In terms of assembly, part of the 50S ribosomal subunit; part of the 5S rRNA/L5/L18/L25 subcomplex. Contacts the 5S rRNA. Binds to the 5S rRNA independently of L5 and L18.

In terms of biological role, this is one of the proteins that binds to the 5S RNA in the ribosome where it forms part of the central protuberance. This Burkholderia ambifaria (strain MC40-6) protein is Large ribosomal subunit protein bL25.